Reading from the N-terminus, the 293-residue chain is MAAITASMVAELRAKTDAPMMECKKALTEADGDMAKAEELLRVKLGNKASKAASRVTAEGVVASFVGGNAGALVELNCETDFVAKNDDFNAFAKQVAELVATKNPVDVAALSALPLDGKTVDEVRLALVGKIGENISIRRFVRFETANKLATYLHGSRIGVMVEYTGADEQVGKDVAMHVAAMKPVSLSADEVPADLIEKERRVAEQKAAESGKPAEIVAKMVDGSVQKFLKEVSLLNQPFVKNDKQTIEQMLKAANAAVQKFALFVVGEGIEKRQDDFAAEVAAQVAAAKQQ.

The tract at residues 80–83 is involved in Mg(2+) ion dislocation from EF-Tu; it reads TDFV.

Belongs to the EF-Ts family.

Its subcellular location is the cytoplasm. In terms of biological role, associates with the EF-Tu.GDP complex and induces the exchange of GDP to GTP. It remains bound to the aminoacyl-tRNA.EF-Tu.GTP complex up to the GTP hydrolysis stage on the ribosome. The sequence is that of Elongation factor Ts from Burkholderia multivorans (strain ATCC 17616 / 249).